The primary structure comprises 296 residues: NAD kinase (296 aa).

The active-site Proton acceptor is Asp-72. NAD(+) contacts are provided by residues 72–73 (DG), 146–147 (ND), Arg-157, Lys-174, Asp-176, 187–192 (TAYALS), and Gln-247.

Belongs to the NAD kinase family. A divalent metal cation is required as a cofactor.

It is found in the cytoplasm. The enzyme catalyses NAD(+) + ATP = ADP + NADP(+) + H(+). Involved in the regulation of the intracellular balance of NAD and NADP, and is a key enzyme in the biosynthesis of NADP. Catalyzes specifically the phosphorylation on 2'-hydroxyl of the adenosine moiety of NAD to yield NADP. The sequence is that of NAD kinase from Pseudomonas putida (strain W619).